The sequence spans 171 residues: Endoribonuclease YbeY (171 aa).

The Zn(2+) site is built by His-130, His-134, and His-140.

Belongs to the endoribonuclease YbeY family. It depends on Zn(2+) as a cofactor.

The protein resides in the cytoplasm. In terms of biological role, single strand-specific metallo-endoribonuclease involved in late-stage 70S ribosome quality control and in maturation of the 3' terminus of the 16S rRNA. The chain is Endoribonuclease YbeY from Neisseria meningitidis serogroup C / serotype 2a (strain ATCC 700532 / DSM 15464 / FAM18).